The following is a 167-amino-acid chain: Large ribosomal subunit protein uL10 (167 aa).

This sequence belongs to the universal ribosomal protein uL10 family. In terms of assembly, part of the ribosomal stalk of the 50S ribosomal subunit. The N-terminus interacts with L11 and the large rRNA to form the base of the stalk. The C-terminus forms an elongated spine to which L12 dimers bind in a sequential fashion forming a multimeric L10(L12)X complex.

Forms part of the ribosomal stalk, playing a central role in the interaction of the ribosome with GTP-bound translation factors. The chain is Large ribosomal subunit protein uL10 from Mycoplasma mobile (strain ATCC 43663 / 163K / NCTC 11711) (Mesomycoplasma mobile).